Consider the following 155-residue polypeptide: Ribosomal RNA large subunit methyltransferase H (155 aa).

Residues leucine 73, glycine 104, and 123–128 (LSPLTL) contribute to the S-adenosyl-L-methionine site.

Belongs to the RNA methyltransferase RlmH family. As to quaternary structure, homodimer.

Its subcellular location is the cytoplasm. The enzyme catalyses pseudouridine(1915) in 23S rRNA + S-adenosyl-L-methionine = N(3)-methylpseudouridine(1915) in 23S rRNA + S-adenosyl-L-homocysteine + H(+). Specifically methylates the pseudouridine at position 1915 (m3Psi1915) in 23S rRNA. The chain is Ribosomal RNA large subunit methyltransferase H from Pseudomonas putida (strain W619).